Reading from the N-terminus, the 462-residue chain is Argininosuccinate lyase (462 aa).

The protein belongs to the lyase 1 family. Argininosuccinate lyase subfamily.

It localises to the cytoplasm. The catalysed reaction is 2-(N(omega)-L-arginino)succinate = fumarate + L-arginine. The protein operates within amino-acid biosynthesis; L-arginine biosynthesis; L-arginine from L-ornithine and carbamoyl phosphate: step 3/3. In Prochlorococcus marinus (strain MIT 9211), this protein is Argininosuccinate lyase.